Consider the following 429-residue polypeptide: Gamma-glutamyl phosphate reductase (429 aa).

The protein belongs to the gamma-glutamyl phosphate reductase family.

It is found in the cytoplasm. The catalysed reaction is L-glutamate 5-semialdehyde + phosphate + NADP(+) = L-glutamyl 5-phosphate + NADPH + H(+). The protein operates within amino-acid biosynthesis; L-proline biosynthesis; L-glutamate 5-semialdehyde from L-glutamate: step 2/2. In terms of biological role, catalyzes the NADPH-dependent reduction of L-glutamate 5-phosphate into L-glutamate 5-semialdehyde and phosphate. The product spontaneously undergoes cyclization to form 1-pyrroline-5-carboxylate. This is Gamma-glutamyl phosphate reductase from Methylibium petroleiphilum (strain ATCC BAA-1232 / LMG 22953 / PM1).